Reading from the N-terminus, the 487-residue chain is Structure-specific endonuclease subunit SLX1 (487 aa).

In terms of domain architecture, GIY-YIG spans 27–109; that stretch reads PFYACYLLRS…QKPELSRHLR (83 aa). Positions 44–69 are disordered; the sequence is RTYVGSTPDPPRRIRQHNGELKQGAW. An SLX1-type zinc finger spans residues 262 to 328; it reads CHLCQERIAF…LPYQGLCPNC (67 aa). The segment covering 359–396 has biased composition (basic and acidic residues); it reads KAEKAEKAEKAEKAEKAEKAEKAGRKVRQREMKTKKGD. Disordered regions lie at residues 359–407 and 433–475; these read KAEK…QPES and PARS…SEPE. Over residues 397–407 the composition is skewed to polar residues; sequence QSNGTVAQPES. Over residues 438-455 the composition is skewed to basic and acidic residues; the sequence is KSKDVGGEGIRHSTHTDD. Over residues 465 to 475 the composition is skewed to acidic residues; that stretch reads ETEDESESEPE.

Belongs to the SLX1 family. As to quaternary structure, forms a heterodimer with SLX4. Requires a divalent metal cation as cofactor.

The protein resides in the nucleus. In terms of biological role, catalytic subunit of the SLX1-SLX4 structure-specific endonuclease that resolves DNA secondary structures generated during DNA repair and recombination. Has endonuclease activity towards branched DNA substrates, introducing single-strand cuts in duplex DNA close to junctions with ss-DNA. This is Structure-specific endonuclease subunit SLX1 from Cryptococcus neoformans var. neoformans serotype D (strain B-3501A) (Filobasidiella neoformans).